We begin with the raw amino-acid sequence, 435 residues long: ATP-dependent protease ATPase subunit HslU (435 aa).

ATP contacts are provided by residues valine 18, 60-65, aspartate 248, glutamate 313, and arginine 385; that span reads GVGKTE.

Belongs to the ClpX chaperone family. HslU subfamily. As to quaternary structure, a double ring-shaped homohexamer of HslV is capped on each side by a ring-shaped HslU homohexamer. The assembly of the HslU/HslV complex is dependent on binding of ATP.

Its subcellular location is the cytoplasm. In terms of biological role, ATPase subunit of a proteasome-like degradation complex; this subunit has chaperone activity. The binding of ATP and its subsequent hydrolysis by HslU are essential for unfolding of protein substrates subsequently hydrolyzed by HslV. HslU recognizes the N-terminal part of its protein substrates and unfolds these before they are guided to HslV for hydrolysis. The protein is ATP-dependent protease ATPase subunit HslU of Azorhizobium caulinodans (strain ATCC 43989 / DSM 5975 / JCM 20966 / LMG 6465 / NBRC 14845 / NCIMB 13405 / ORS 571).